Reading from the N-terminus, the 267-residue chain is Regulatory protein RecX (267 aa).

Belongs to the RecX family.

The protein resides in the cytoplasm. In terms of biological role, modulates RecA activity. The polypeptide is Regulatory protein RecX (Staphylococcus carnosus (strain TM300)).